A 1447-amino-acid polypeptide reads, in one-letter code: Calcium-dependent secretion activator (1447 aa).

A compositionally biased stretch (acidic residues) spans 1-15 (MIDPSSSEEEGEDDA). Disordered regions lie at residues 1-35 (MIDPSSSEEEGEDDAVPNVSSKGRLTNTTKGTSAV) and 101-163 (DTGN…EEEE). Composition is skewed to polar residues over residues 18–32 (NVSSKGRLTNTTKGT) and 111–126 (GIPSGISQETLNQSVG). The segment covering 127–144 (SSRANSLPRPLSPSPSLT) has biased composition (low complexity). Over residues 145–163 (SEKHETAEPHGKHEREEEE) the composition is skewed to basic and acidic residues. A C2 domain is found at 417–547 (SKYGLQKLKR…PLSSKSPEWH (131 aa)). Positions 573–683 (NMKHCGYLYA…WVMAMYRATG (111 aa)) constitute a PH domain. Residues 970 to 1157 (VDMDRVLSEQ…DMIEQCIQRT (188 aa)) enclose the MHD1 domain. Acidic residues predominate over residues 1386–1395 (REGEEEDNGD). Positions 1386–1406 (REGEEEDNGDESTSNIPRGLP) are disordered.

In terms of tissue distribution, restricted to the nervous system at all stages of development and highly localized at synapses (at protein level).

It is found in the cytoplasmic vesicle membrane. It localises to the synapse. Functionally, calcium-binding protein involved in exocytosis of vesicles filled with neurotransmitters and neuropeptides. May specifically mediate the Ca(2+)-dependent exocytosis of large dense-core vesicles (DCVs) and other dense-core vesicles. However, it probably also participates in small clear synaptic vesicles (SVs) exocytosis and it is unclear whether its function is related to Ca(2+) triggering. The protein is Calcium-dependent secretion activator of Drosophila melanogaster (Fruit fly).